The primary structure comprises 243 residues: MKRYNAKRKTHRNLKSIKKLIPTVLALLAFVSLLAGIITLHNPKTLPFRQIKITVSSDHIKMAELKDIVVHHIQGGFFSFNASALQTALMSLPWVHDVSVRRIWPNELEIQVEEQRPIARWNQNELITQEGEIFSPPIETIPQNIPQLSGPNDSEENVLNRFQQFSQLLIPFHAAVTALSLTKRGAWSLILNGHTQIFLGRENIDQRFEQFVHLYPKIIGANINRVEHVDLRYSNGLAIQWKN.

Residues 1–19 lie on the Cytoplasmic side of the membrane; that stretch reads MKRYNAKRKTHRNLKSIKK. Residues 20-40 form a helical membrane-spanning segment; the sequence is LIPTVLALLAFVSLLAGIITL. The Periplasmic portion of the chain corresponds to 41–243; sequence HNPKTLPFRQ…SNGLAIQWKN (203 aa). A POTRA domain is found at 46–115; it reads LPFRQIKITV…NELEIQVEEQ (70 aa).

Belongs to the FtsQ/DivIB family. FtsQ subfamily. Part of a complex composed of FtsB, FtsL and FtsQ.

It is found in the cell inner membrane. Essential cell division protein. May link together the upstream cell division proteins, which are predominantly cytoplasmic, with the downstream cell division proteins, which are predominantly periplasmic. May control correct divisome assembly. This is Cell division protein FtsQ from Coxiella burnetii (strain RSA 493 / Nine Mile phase I).